Here is a 120-residue protein sequence, read N- to C-terminus: Large ribosomal subunit protein uL18 (120 aa).

The protein belongs to the universal ribosomal protein uL18 family. In terms of assembly, part of the 50S ribosomal subunit; part of the 5S rRNA/L5/L18/L25 subcomplex. Contacts the 5S and 23S rRNAs.

Functionally, this is one of the proteins that bind and probably mediate the attachment of the 5S RNA into the large ribosomal subunit, where it forms part of the central protuberance. In Brucella abortus (strain S19), this protein is Large ribosomal subunit protein uL18.